The chain runs to 552 residues: Hydroxylamine reductase (552 aa).

The [2Fe-2S] cluster site is built by cysteine 5, cysteine 8, cysteine 20, and cysteine 27. Positions 251, 275, 319, 407, 435, 460, 494, and 496 each coordinate hybrid [4Fe-2O-2S] cluster. Cysteine 407 carries the post-translational modification Cysteine persulfide.

This sequence belongs to the HCP family. [2Fe-2S] cluster serves as cofactor. Hybrid [4Fe-2O-2S] cluster is required as a cofactor.

Its subcellular location is the cytoplasm. The enzyme catalyses A + NH4(+) + H2O = hydroxylamine + AH2 + H(+). Functionally, catalyzes the reduction of hydroxylamine to form NH(3) and H(2)O. This is Hydroxylamine reductase from Shigella boydii serotype 4 (strain Sb227).